A 129-amino-acid chain; its full sequence is Glycine cleavage system H protein (129 aa).

The Lipoyl-binding domain maps to 23–105; it reads SAVVGITEHA…YGEGWLAKFS (83 aa). K64 bears the N6-lipoyllysine mark.

Belongs to the GcvH family. In terms of assembly, the glycine cleavage system is composed of four proteins: P, T, L and H. It depends on (R)-lipoate as a cofactor.

Its function is as follows. The glycine cleavage system catalyzes the degradation of glycine. The H protein shuttles the methylamine group of glycine from the P protein to the T protein. The sequence is that of Glycine cleavage system H protein from Herpetosiphon aurantiacus (strain ATCC 23779 / DSM 785 / 114-95).